The chain runs to 116 residues: Large ribosomal subunit protein bL19 (116 aa).

Belongs to the bacterial ribosomal protein bL19 family.

In terms of biological role, this protein is located at the 30S-50S ribosomal subunit interface and may play a role in the structure and function of the aminoacyl-tRNA binding site. The polypeptide is Large ribosomal subunit protein bL19 (Flavobacterium johnsoniae (strain ATCC 17061 / DSM 2064 / JCM 8514 / BCRC 14874 / CCUG 350202 / NBRC 14942 / NCIMB 11054 / UW101) (Cytophaga johnsonae)).